We begin with the raw amino-acid sequence, 755 residues long: 1,4-alpha-glucan branching enzyme GlgB (755 aa).

Residue D435 is the Nucleophile of the active site. Catalysis depends on E488, which acts as the Proton donor.

The protein belongs to the glycosyl hydrolase 13 family. GlgB subfamily. As to quaternary structure, monomer.

The enzyme catalyses Transfers a segment of a (1-&gt;4)-alpha-D-glucan chain to a primary hydroxy group in a similar glucan chain.. Its pathway is glycan biosynthesis; glycogen biosynthesis. Catalyzes the formation of the alpha-1,6-glucosidic linkages in glycogen by scission of a 1,4-alpha-linked oligosaccharide from growing alpha-1,4-glucan chains and the subsequent attachment of the oligosaccharide to the alpha-1,6 position. The polypeptide is 1,4-alpha-glucan branching enzyme GlgB (Vibrio parahaemolyticus serotype O3:K6 (strain RIMD 2210633)).